The sequence spans 827 residues: Beta-galactosidase 2 (827 aa).

The first 24 residues, 1–24 (MAASAVAVAFVVAVAAVLAAAASA), serve as a signal peptide directing secretion. Residue Glu-182 is the Proton donor of the active site. Asn-209 carries an N-linked (GlcNAc...) asparagine glycan. The active-site Nucleophile is Glu-251. A glycan (N-linked (GlcNAc...) asparagine) is linked at Asn-458. The 87-residue stretch at 741–827 (DYEKAKVHLQ…KRAVVEAICG (87 aa)) folds into the SUEL-type lectin domain.

Belongs to the glycosyl hydrolase 35 family.

Its subcellular location is the secreted. It is found in the extracellular space. The protein localises to the apoplast. It carries out the reaction Hydrolysis of terminal non-reducing beta-D-galactose residues in beta-D-galactosides.. This chain is Beta-galactosidase 2, found in Oryza sativa subsp. japonica (Rice).